Consider the following 633-residue polypeptide: MSYEFDENFDVIVVGAGHAGVEASLAAARMGCKVLLATINLEMLAFMPCNPSIGGSAKGIVVREIDALGGEMGKNIDKTYIQMKMLNTGKGPAVRALRAQADKALYAMTMKHTVECQENLTLRQSMVDEILVEDSKVVGVRTATNQKYGAKAVVVTTGTALRGEIIIGDLKYSSGPNNSLASVTLADNLKELGLEIGRFKTGTPPRVKASSINYEETEIQPGDEKPNHFSFLSKDEDYLQDQIPCWLTYTNQESHDIINNNLHRAPMFSGIVKGVGPRYCPSIEDKIVRFADKNRHQLFLEPEGRETEEVYVQGLSTSLPEDVQKELIHSIKGLEKAEMIRTGYAIEYDIVLPHQLRATLETKLISGLFTAGQTNGTSGYEEAAGQGLVAGINAALKVQGKPELILKRSDAYIGVMIDDLVTKGTLEPYRLLTSRAEYRLILRHDNADMRLTPIGREVGLVDDERWNIFKIKKNQFDRELTRLSKEKLKPIKETNEKIQALGFKPLTDAMTAKEFMRRPEIDYATATQFVGPAAEDLDAKVIELLETEIKYEGYINKALDQVAKMKRMEEKKIPENIDWDAIDSIATEARQKFKKINPETIGQASRISGVNPADISILMVYLEGNNKARRKVD.

FAD contacts are provided by residues 15–20 (GAGHAG), Val127, and Ser182. 276-290 (GPRYCPSIEDKIVRF) lines the NAD(+) pocket. Gln373 contacts FAD.

The protein belongs to the MnmG family. As to quaternary structure, homodimer. Heterotetramer of two MnmE and two MnmG subunits. It depends on FAD as a cofactor.

It localises to the cytoplasm. Its function is as follows. NAD-binding protein involved in the addition of a carboxymethylaminomethyl (cmnm) group at the wobble position (U34) of certain tRNAs, forming tRNA-cmnm(5)s(2)U34. The protein is tRNA uridine 5-carboxymethylaminomethyl modification enzyme MnmG of Streptococcus thermophilus (strain ATCC BAA-491 / LMD-9).